Consider the following 353-residue polypeptide: MTARLRPELAGLPVYVPGKTVPGAIKLASNETVFGPLPSVRAAIDRATDTVNRYPDNGCVQLKAALARHLGPDFAPEHVAVGCGSVSLCQQLVQVTASVGDEVVFGWRSFELYPPQVRVAGAIPIQVPLTDHTFDLYAMLATVTDRTRLIFVCNPNNPTSTVVGPDALARFVEAVPAHILIAIDEAYVEYIRDGMRPDSLGLVRAHNNVVVLRTFSKAYGLAGLRIGYAIGHPDVITALDKVYVPFTVSSIGQAAAIASLDAADELLARTDTVVAERARVSAELRAAGFTLPPSQANFVWLPLGSRTQDFVEQAADARIVVRPYGTDGVRVTVAAPEENDAFLRFARRWRSDQ.

N6-(pyridoxal phosphate)lysine is present on K217.

This sequence belongs to the class-II pyridoxal-phosphate-dependent aminotransferase family. In terms of assembly, homodimer. Requires pyridoxal 5'-phosphate as cofactor.

The catalysed reaction is an aromatic L-alpha-amino acid + 2-oxoglutarate = an aromatic oxo-acid + L-glutamate. Functionally, aminotransferase that catalyzes the conversion of aromatic amino acids and 2-oxoglutarate into corresponding aromatic oxo acids and L-glutamate. The protein is Aromatic amino acid aminotransferase of Mycobacterium tuberculosis (strain ATCC 25177 / H37Ra).